A 442-amino-acid chain; its full sequence is Cyclic adenylate deaminase (442 aa).

Belongs to the metallo-dependent hydrolases superfamily. Adenosine and AMP deaminases family. Zn(2+) is required as a cofactor.

It carries out the reaction 3',5'-cyclic AMP + H2O + H(+) = 3',5'-cyclic IMP + NH4(+). Its function is as follows. Deaminates cAMP into cIMP, thereby repressing cAMP dependent metabolism or genes. This chain is Cyclic adenylate deaminase (add), found in Leptospira interrogans serogroup Icterohaemorrhagiae serovar copenhageni (strain Fiocruz L1-130).